A 227-amino-acid polypeptide reads, in one-letter code: MAVKASGFIGKSAISVHLDFSSFPVKFSCLKQFSVSSPKPLVVLSVALSSPARTVESPPVGYRKNVGICLVSPCRKIFTASKIHIPDTWQMPQGGADEGEDLRNAAFRELREETGVTSAEFIAEIPNWLTYDFPREVKDKLNRKWRTSYKGQAQKWFLFKFTGKEEEINLLGDGTAKPEFKVWSWMLPEQVIEHAVYFKRPVYEHVIKQFNPYFVDEEKDSMNSSKD.

The N-terminal 44 residues, 1–44 (MAVKASGFIGKSAISVHLDFSSFPVKFSCLKQFSVSSPKPLVVL), are a transit peptide targeting the chloroplast. Positions 61–208 (GYRKNVGICL…KRPVYEHVIK (148 aa)) constitute a Nudix hydrolase domain. The Nudix box signature appears at 94–115 (GGADEGEDLRNAAFRELREETG). 2 residues coordinate Mn(2+): Glu-109 and Glu-113.

It belongs to the Nudix hydrolase family. The cofactor is Mg(2+). It depends on Mn(2+) as a cofactor. As to expression, expressed in roots, leaves, stems and inflorescences.

Its subcellular location is the plastid. The protein localises to the chloroplast. Functionally, mediates the hydrolysis of some nucleoside diphosphate derivatives. Can use diadenosine 5',5'''-P(1)P(5) pentaphosphate (Ap(5)A) as substrates. The polypeptide is Nudix hydrolase 27, chloroplastic (NUDT27) (Arabidopsis thaliana (Mouse-ear cress)).